Reading from the N-terminus, the 364-residue chain is Fructose-1,6-bisphosphatase class 1 2 (364 aa).

Mg(2+) contacts are provided by Glu-99, Asp-121, Leu-123, and Asp-124. Substrate contacts are provided by residues 124-127 and Asn-220; that span reads DGSS. A Mg(2+)-binding site is contributed by Glu-292.

Belongs to the FBPase class 1 family. Homotetramer. Mg(2+) is required as a cofactor.

The protein resides in the cytoplasm. The catalysed reaction is beta-D-fructose 1,6-bisphosphate + H2O = beta-D-fructose 6-phosphate + phosphate. It functions in the pathway carbohydrate biosynthesis; gluconeogenesis. The chain is Fructose-1,6-bisphosphatase class 1 2 from Polaromonas naphthalenivorans (strain CJ2).